Reading from the N-terminus, the 831-residue chain is Histone acetyltransferase SAS3 (831 aa).

Residues 267 to 573 (VWFSQIEYIV…VKYDKLLWEP (307 aa)) form the MYST-type HAT domain. The C2HC MYST-type zinc-finger motif lies at 300–325 (VFICEFCLKYMTSRYTFYRHQLKCLT). K367 is subject to N6-acetyllysine; by autocatalysis. Acetyl-CoA contacts are provided by residues 419-421 (ILT) and 426-432 (QRKGYGQ). The Proton donor/acceptor role is filled by E452. S456 is an acetyl-CoA binding site. Disordered stretches follow at residues 614 to 639 (ENYNNSRAHNKRRRRRRRSSEHKTSK) and 719 to 813 (PLGN…SHIR). Residues 621–633 (AHNKRRRRRRRSS) show a composition bias toward basic residues. Composition is skewed to acidic residues over residues 736 to 746 (EQDEVENDVDT) and 755 to 794 (KEDEDEDEDFTLDDDIEDEQISEENDEEEDTYEEDSDDDE). Residues 795–812 (DGKRKGQEQDENDIESHI) are compositionally biased toward basic and acidic residues.

The protein belongs to the MYST (SAS/MOZ) family. Component of the NuA3 histone acetyltransferase (HAT) complex. The NuA3 HAT complex has 2 functionally distinct forms that participate in transcription. The NuA3a HAT complex is composed of at least NTO1, SAS3, TAF14, YNG1 and EAF6. The NuA3b HAT complex contains an additional subunit, PDP3. SAS3 interacts with CDC68/SPT16. Autoacetylation at Lys-367 is required for proper function.

It localises to the nucleus. The enzyme catalyses L-lysyl-[protein] + acetyl-CoA = N(6)-acetyl-L-lysyl-[protein] + CoA + H(+). Catalytic component of the NuA3 histone acetyltransferase complex, that acetylates H3K14. The NuA3 HAT complex has 2 functionally distinct forms. NuA3a binds H3K4me3, through the PHD finger of YNG1, and acetylates H3K14 at the promoter region of actively transcribed genes to promote transcription initiation. NuA3b binds H3K36me3 at the coding regions of actively transcribed genes, through the PWWP domain of PDP3, and coordinates transcription elongation. In vitro, SAS3 acetylates free histones H3 and H4. It is involved in silencing the HMR locus. The sequence is that of Histone acetyltransferase SAS3 from Saccharomyces cerevisiae (strain ATCC 204508 / S288c) (Baker's yeast).